Here is a 336-residue protein sequence, read N- to C-terminus: Oxaloacetate decarboxylase (336 aa).

Residues 10-258 enclose the Pyruvate carboxyltransferase domain; it reads PIVLDTTVRD…LAAVDLDRIF (249 aa). Aspartate 19, histidine 197, and histidine 199 together coordinate Mn(2+).

Belongs to the 4-hydroxy-2-oxovalerate aldolase family. Homodimer. A divalent metal cation serves as cofactor.

The enzyme catalyses oxaloacetate + H(+) = pyruvate + CO2. With respect to regulation, activity is abolished upon incubation with Chelex and EDTA. In terms of biological role, exhibits oxaloacetate decarboxylase activity. Lacks any detectable aldolase activity with 4-hydroxy-2-oxopentanoate (HOPA), 4-hydroxy-2-oxohexanoate (HOHA) or other 4-hydroxy-2-oxoacids. In Mycobacterium tuberculosis (strain ATCC 25618 / H37Rv), this protein is Oxaloacetate decarboxylase.